Here is a 32-residue protein sequence, read N- to C-terminus: DCLGWMAGCDFNDNKCCAGYVCKKHPWCRYDL.

3 disulfide bridges follow: Cys-2–Cys-17, Cys-9–Cys-22, and Cys-16–Cys-28.

This sequence belongs to the neurotoxin 10 (Hwtx-1) family. As to expression, expressed by the venom gland.

The protein resides in the secreted. Its function is as follows. Voltage-gated sodium channel Nav1.7/SCN9A inhibitor. The protein is Mu-theraphotoxin-Se1a of Selenocosmia effera (Tarantula spider).